Consider the following 704-residue polypeptide: Matrix metalloproteinase-9 (704 aa).

Positions 1–19 (MSPRQPLVLVFLVLGCCSA) are cleaved as a signal peptide. Positions 20-106 (APRPHKPTVV…PRCGVPDLGK (87 aa)) are cleaved as a propeptide — activation peptide. A glycan (N-linked (GlcNAc...) asparagine) is linked at Asn38. Positions 97–104 (PRCGVPDL) match the Cysteine switch motif. Cys99 contacts Zn(2+). A glycan (N-linked (GlcNAc...) asparagine) is linked at Asn127. Ca(2+) contacts are provided by Asp131 and Asp165. Residues His175 and Asp177 each contribute to the Zn(2+) site. Ca(2+)-binding residues include Asp182, Gly183, Asn185, and Leu187. His190 contacts Zn(2+). Positions 197, 199, and 201 each coordinate Ca(2+). His203 lines the Zn(2+) pocket. 3 residues coordinate Ca(2+): Asp205, Asp206, and Glu208. 3 consecutive Fibronectin type-II domains span residues 225 to 273 (ADGA…FCPS), 283 to 331 (GDGK…FCPT), and 342 to 390 (SAGE…FCPD). Cystine bridges form between Cys230–Cys256, Cys244–Cys271, Cys288–Cys314, Cys302–Cys329, Cys347–Cys373, and Cys361–Cys388. His401 lines the Zn(2+) pocket. The active site involves Glu402. The Zn(2+) site is built by His405 and His411. The interval 434-507 (DDVRGIQHLY…PSEAPTVPVD (74 aa)) is disordered. Composition is skewed to pro residues over residues 450–461 (EPQPPTAPPTAP) and 483–496 (TGPP…PPTA). Cysteines 513 and 701 form a disulfide. Hemopexin repeat units lie at residues 515-560 (VNIF…WPAL), 561-605 (PRKL…GLGP), 607-654 (VTQV…YPGV), and 655-701 (PLNT…ILQC).

It belongs to the peptidase M10A family. Exists as monomer or homodimer; disulfide-linked. Also exists as heterodimer with LCN2. Macrophages and transformed cell lines produce only the monomeric form. Interacts with ECM1. The cofactor is Zn(2+). Requires Ca(2+) as cofactor. Post-translationally, N- and O-glycosylated.

The protein resides in the secreted. The protein localises to the extracellular space. It localises to the extracellular matrix. The enzyme catalyses Cleavage of gelatin types I and V and collagen types IV and V.. Its function is as follows. Matrix metalloproteinase that plays an essential role in local proteolysis of the extracellular matrix and in leukocyte migration. Could play a role in bone osteoclastic resorption. Cleaves KiSS1 at a Gly-|-Leu bond. Cleaves NINJ1 to generate the Secreted ninjurin-1 form. Cleaves type IV and type V collagen into large C-terminal three quarter fragments and shorter N-terminal one quarter fragments. Degrades fibronectin but not laminin or Pz-peptide. This Canis lupus familiaris (Dog) protein is Matrix metalloproteinase-9 (MMP9).